We begin with the raw amino-acid sequence, 529 residues long: MNNNDLVAKLWKLCDNLRDGGVSYQNYVNELASLLFLKMCKETGQEADYLPEGYRWDDLKSRIGQDQMQFYRNLLVQLGSDEKKLVQAVFHNVSTTIEQPKQLTELVSYMDALDWYNGNHGKSRDDFGDMYEGLLQKNANETKSGAGQYFTPRPLIKTIIHLLKPQPREVVQDPAAGTAGFLIEADRYVKSQTNDLDDLDGDTQDFQIHRAFIGLELVPGTRRLALMNCLLHDIEGNLDHGGAIRLGNTLGSDGENLPKAHIVATNPPFGSAAGTNITRTFVHPTSNKQLCFMQHIIETLHPGGRAAVVVPDNVLFEGGKGTDIRRDLMDKCHLHTILRLPTGIFYAQGVKTNVLFFTKGTVTNPHQDKNCTDDVWVYDLRTNMPSFGKRTPFTEQHLQPFETVYGEDPHGLSPREEGEWSFNAEESEVADSEENKNTDQHQATSRWRKFSREWIRSAKSDSLDISWLKDKDSIDADSLPEPDVLAAEAMGELVQALGELDALMRELGAGDEADAQRQLLNEAFGEVKA.

Residues 148-153 (QYFTPR), 178-180 (TAG), and Glu216 each bind S-adenosyl-L-methionine. A disordered region spans residues 405-444 (YGEDPHGLSPREEGEWSFNAEESEVADSEENKNTDQHQAT). Over residues 407–418 (EDPHGLSPREEG) the composition is skewed to basic and acidic residues.

Belongs to the N(4)/N(6)-methyltransferase family. The type I restriction/modification system is composed of three polypeptides R, M and S; the restriction enzyme has stoichiometry R(2)M(2)S(1) while the methyltransferase is M(2)S(1).

It catalyses the reaction a 2'-deoxyadenosine in DNA + S-adenosyl-L-methionine = an N(6)-methyl-2'-deoxyadenosine in DNA + S-adenosyl-L-homocysteine + H(+). The subtype gamma methyltransferase (M) subunit of a type I restriction enzyme. The M and S subunits together form a methyltransferase (MTase) that methylates two adenine residues of the sequence 5'-GAGN(6)GTRC-3'. In the presence of the R subunit the complex can also act as an endonuclease, binding to the same target sequence but cutting the DNA some distance from this site. Whether the DNA is cut or modified depends on the methylation state of the target sequence. When the target site is unmodified, the DNA is cut. When the target site is hemimethylated, the complex acts as a maintenance MTase modifying the DNA so that both strands become methylated. After locating a non-methylated recognition site, the enzyme complex serves as a molecular motor that translocates DNA in an ATP-dependent manner until a collision occurs that triggers cleavage. The polypeptide is Type I restriction enzyme StySJI methylase subunit (Salmonella typhimurium (strain LT2 / SGSC1412 / ATCC 700720)).